Here is a 157-residue protein sequence, read N- to C-terminus: Small ribosomal subunit protein uS7 (157 aa).

Belongs to the universal ribosomal protein uS7 family. In terms of assembly, part of the 30S ribosomal subunit. Contacts proteins S9 and S11.

In terms of biological role, one of the primary rRNA binding proteins, it binds directly to 16S rRNA where it nucleates assembly of the head domain of the 30S subunit. Is located at the subunit interface close to the decoding center, probably blocks exit of the E-site tRNA. The chain is Small ribosomal subunit protein uS7 from Salinibacter ruber (strain DSM 13855 / M31).